A 313-amino-acid polypeptide reads, in one-letter code: Oxaloacetate tautomerase Fahd2a, mitochondrial (313 aa).

Residues 1-84 (MLGSGRRRLL…TALSVARRAL (84 aa)) constitute a mitochondrion transit peptide. Mg(2+)-binding residues include glutamate 159, glutamate 161, and aspartate 190. Residue lysine 202 is modified to N6-acetyllysine; alternate. Lysine 202 bears the N6-succinyllysine; alternate mark. Lysine 233 carries the N6-acetyllysine modification.

This sequence belongs to the FAH family. It depends on Mg(2+) as a cofactor. Mn(2+) serves as cofactor.

It localises to the mitochondrion. It carries out the reaction oxaloacetate = enol-oxaloacetate. In terms of biological role, tautomerase that converts enol-oxaloacetate, a strong inhibitor of succinate dehydrogenase, to the physiological keto form of oxaloacetate. It is thereby required to maximize aerobic respiration efficiency by preventing succinate dehydrogenase inhibition. This chain is Oxaloacetate tautomerase Fahd2a, mitochondrial, found in Rattus norvegicus (Rat).